The primary structure comprises 544 residues: Methionine--tRNA ligase 2 (544 aa).

The 'HIGH' region signature appears at 10–20 (PYANGSLHLGH). Zn(2+) is bound by residues C141, C144, C153, and C156. A 'KMSKS' region motif is present at residues 329-333 (KLSTS). T332 lines the ATP pocket.

This sequence belongs to the class-I aminoacyl-tRNA synthetase family. MetG type 1 subfamily. As to quaternary structure, monomer. Zn(2+) is required as a cofactor.

Its subcellular location is the cytoplasm. It carries out the reaction tRNA(Met) + L-methionine + ATP = L-methionyl-tRNA(Met) + AMP + diphosphate. Functionally, is required not only for elongation of protein synthesis but also for the initiation of all mRNA translation through initiator tRNA(fMet) aminoacylation. This chain is Methionine--tRNA ligase 2, found in Bacillus cereus (strain ATCC 14579 / DSM 31 / CCUG 7414 / JCM 2152 / NBRC 15305 / NCIMB 9373 / NCTC 2599 / NRRL B-3711).